A 226-amino-acid chain; its full sequence is UPF0758 protein PSEEN5431 (226 aa).

An MPN domain is found at 102-224 (VMDNPLAVRR…PLSMIEHGWL (123 aa)). Zn(2+) contacts are provided by H173, H175, and D186. The JAMM motif signature appears at 173 to 186 (HNHPSGNCEPSQDD).

This sequence belongs to the UPF0758 family.

This chain is UPF0758 protein PSEEN5431, found in Pseudomonas entomophila (strain L48).